A 37-amino-acid polypeptide reads, in one-letter code: Photosystem II reaction center protein T (37 aa).

A helical membrane pass occupies residues 3-23; that stretch reads ALVYTFLLVSTLGIIFFAIFF.

The protein belongs to the PsbT family. As to quaternary structure, PSII is composed of 1 copy each of membrane proteins PsbA, PsbB, PsbC, PsbD, PsbE, PsbF, PsbH, PsbI, PsbJ, PsbK, PsbL, PsbM, PsbT, PsbY, PsbZ, Psb30/Ycf12, at least 3 peripheral proteins of the oxygen-evolving complex and a large number of cofactors. It forms dimeric complexes.

The protein resides in the plastid. It is found in the chloroplast thylakoid membrane. Functionally, found at the monomer-monomer interface of the photosystem II (PS II) dimer, plays a role in assembly and dimerization of PSII. PSII is a light-driven water plastoquinone oxidoreductase, using light energy to abstract electrons from H(2)O, generating a proton gradient subsequently used for ATP formation. This is Photosystem II reaction center protein T from Cucumis sativus (Cucumber).